The chain runs to 291 residues: UDP-N-acetylenolpyruvoylglucosamine reductase (291 aa).

In terms of domain architecture, FAD-binding PCMH-type spans 19–186 (GIGGPAEWIA…VSARLKLASG (168 aa)). Arg165 is a catalytic residue. Catalysis depends on Ser215, which acts as the Proton donor. The active site involves Glu285.

Belongs to the MurB family. The cofactor is FAD.

It localises to the cytoplasm. The catalysed reaction is UDP-N-acetyl-alpha-D-muramate + NADP(+) = UDP-N-acetyl-3-O-(1-carboxyvinyl)-alpha-D-glucosamine + NADPH + H(+). It functions in the pathway cell wall biogenesis; peptidoglycan biosynthesis. Cell wall formation. The polypeptide is UDP-N-acetylenolpyruvoylglucosamine reductase (Prochlorococcus marinus (strain NATL2A)).